The following is a 352-amino-acid chain: Probable gamma-glutamyl hydrolase 3 (352 aa).

A signal peptide spans 1–19; that stretch reads MWRFCFFLSLLFFDVSAVK. The 304-residue stretch at 49–352 folds into the Gamma-glutamyl hydrolase domain; it reads AADPNLNYKP…SGDDEVYIFT (304 aa). The active-site Nucleophile is the C166. Residue H279 is part of the active site.

This sequence belongs to the peptidase C26 family.

The protein resides in the vacuole. It localises to the secreted. Its subcellular location is the extracellular space. The protein localises to the cell wall. The enzyme catalyses (6S)-5,6,7,8-tetrahydrofolyl-(gamma-L-Glu)(n) + (n-1) H2O = (6S)-5,6,7,8-tetrahydrofolate + (n-1) L-glutamate. In terms of biological role, cleaves the polyglutamate sidechains of folate polyglutamates in the vacuole. Is important for polyglutamyl tail length determination before vacuolar exit. Plays a role on folate stability and intracellular folate content. This Arabidopsis thaliana (Mouse-ear cress) protein is Probable gamma-glutamyl hydrolase 3 (GGH3).